Reading from the N-terminus, the 351-residue chain is Porphobilinogen deaminase (351 aa).

Cys242 carries the S-(dipyrrolylmethanemethyl)cysteine modification.

Belongs to the HMBS family. Monomer. The cofactor is dipyrromethane.

It carries out the reaction 4 porphobilinogen + H2O = hydroxymethylbilane + 4 NH4(+). The protein operates within porphyrin-containing compound metabolism; protoporphyrin-IX biosynthesis; coproporphyrinogen-III from 5-aminolevulinate: step 2/4. In terms of biological role, tetrapolymerization of the monopyrrole PBG into the hydroxymethylbilane pre-uroporphyrinogen in several discrete steps. The polypeptide is Porphobilinogen deaminase (Rickettsia rickettsii (strain Sheila Smith)).